A 506-amino-acid chain; its full sequence is Maturase K (506 aa).

The protein belongs to the intron maturase 2 family. MatK subfamily.

It localises to the plastid. It is found in the chloroplast. Usually encoded in the trnK tRNA gene intron. Probably assists in splicing its own and other chloroplast group II introns. The chain is Maturase K from Gaultheria procumbens (Wintergreen).